Here is a 544-residue protein sequence, read N- to C-terminus: Chaperonin GroEL (544 aa).

Residues T30–P33, K51, D87–T91, G415, D481–L483, and D497 contribute to the ATP site.

This sequence belongs to the chaperonin (HSP60) family. Forms a cylinder of 14 subunits composed of two heptameric rings stacked back-to-back. Interacts with the co-chaperonin GroES.

It localises to the cytoplasm. The enzyme catalyses ATP + H2O + a folded polypeptide = ADP + phosphate + an unfolded polypeptide.. Together with its co-chaperonin GroES, plays an essential role in assisting protein folding. The GroEL-GroES system forms a nano-cage that allows encapsulation of the non-native substrate proteins and provides a physical environment optimized to promote and accelerate protein folding. The chain is Chaperonin GroEL from Chlamydia felis (strain Fe/C-56) (Chlamydophila felis).